A 528-amino-acid chain; its full sequence is Calcium-dependent protein kinase 13 (528 aa).

G2 is lipidated: N-myristoyl glycine. Residues 17–32 show a composition bias toward basic and acidic residues; it reads KSNYSGHDHARKDAAG. Residues 17–37 form a disordered region; the sequence is KSNYSGHDHARKDAAGGKKSA. S43 carries the phosphoserine modification. A Protein kinase domain is found at 54–312; it reads YLLDRELGRG…AKQVLEHPWI (259 aa). ATP-binding positions include 60–68 and K83; that span reads LGRGEFGVT. D178 acts as the Proton acceptor in catalysis. Residue S218 is modified to Phosphoserine. The autoinhibitory domain stretch occupies residues 318–348; that stretch reads APNVPLGDVVKSRLKQFSVMNRFKRKALRVI. EF-hand domains lie at 355–390, 391–426, 427–462, and 463–498; these read EEVEDIKVMFNKMDTDNDGIVSIEELKAGLRDFSTQ, LAESEVQMLIEAVDTKGKGTLDYGEFVAVSLHLQKV, ANDEHLRKAFSYFDKDGNGYILPQELCDALKEDGGD, and DCVDVANDIFQEVDTDKDGRISYEEFAAMMKTGTDW. Ca(2+)-binding residues include D368, D370, D372, E379, D404, T410, E415, D440, D442, N444, Y446, E451, D476, D478, D480, and R482. A Phosphoserine modification is found at S484. E487 is a Ca(2+) binding site. S522 bears the Phosphoserine mark.

This sequence belongs to the protein kinase superfamily. Ser/Thr protein kinase family. CDPK subfamily.

It is found in the cell membrane. It catalyses the reaction L-seryl-[protein] + ATP = O-phospho-L-seryl-[protein] + ADP + H(+). The enzyme catalyses L-threonyl-[protein] + ATP = O-phospho-L-threonyl-[protein] + ADP + H(+). With respect to regulation, activated by calcium. Autophosphorylation may play an important role in the regulation of the kinase activity. May play a role in signal transduction pathways that involve calcium as a second messenger. The polypeptide is Calcium-dependent protein kinase 13 (CPK13) (Arabidopsis thaliana (Mouse-ear cress)).